The following is a 245-amino-acid chain: MEKTELIQKAKLAEQAERYDDMATCMKAVTEQGAELSNEERNLLSVAYKNVVGGRRSAWRVISSIEQKTDTSDKKLQLIKDYREKVESELRSICTTVLELLDKYLIANATNPESKVFYLKMKGDYFRYLAEVACGDDRKQTIDNSQGAYQEAFDISKKEMQPTHPIRLGLALNFSVFYYEILNNPELACTLAKTAFDEAIAELDTLNEDSYKDSTLIMQLLRDNLTLWTSDSAGEECDAAEGAEN.

Met-1 is modified (N-acetylmethionine). The residue at position 3 (Lys-3) is an N6-acetyllysine. Lys-49 is modified (N6-acetyllysine; alternate). Lys-49 participates in a covalent cross-link: Glycyl lysine isopeptide (Lys-Gly) (interchain with G-Cter in SUMO2); alternate. N6-acetyllysine is present on Lys-68. Residue Tyr-82 is modified to 3'-nitrotyrosine. Phosphoserine is present on Ser-92. Tyr-104 is subject to 3'-nitrotyrosine. Lys-115 is modified (N6-acetyllysine). Ser-232 is subject to Phosphoserine; by CK1.

The protein belongs to the 14-3-3 family. Homodimer. Interacts with CDK16. Interacts with RGS7 (phosphorylated form). Interacts with SSH1. Interacts with CDKN1B ('Thr-198' phosphorylated form); the interaction translocates CDKN1B to the cytoplasm. Interacts with GAB2. Interacts with the 'Ser-241' phosphorylated form of PDPK1. Interacts with the 'Thr-369' phosphorylated form of DAPK2. Interacts with PI4KB, TBC1D22A and TBC1D22B. Interacts with SLITRK1. Interacts with RIPOR2. Interacts with INAVA; the interaction increases upon PRR (pattern recognition receptor) stimulation and is required for cellular signaling pathway activation and cytokine secretion. Interacts with MARK2, MARK3 and MARK4. Interacts with MEFV.

It is found in the cytoplasm. Adapter protein implicated in the regulation of a large spectrum of both general and specialized signaling pathways. Binds to a large number of partners, usually by recognition of a phosphoserine or phosphothreonine motif. Binding generally results in the modulation of the activity of the binding partner. Negatively regulates the kinase activity of PDPK1. This chain is 14-3-3 protein theta (YWHAQ), found in Bos taurus (Bovine).